The chain runs to 617 residues: Probable Xaa-Pro aminopeptidase P (617 aa).

Mn(2+)-binding residues include aspartate 414, aspartate 425, glutamate 523, and glutamate 537.

Belongs to the peptidase M24B family. Mn(2+) is required as a cofactor.

The enzyme catalyses Release of any N-terminal amino acid, including proline, that is linked to proline, even from a dipeptide or tripeptide.. Its function is as follows. Catalyzes the removal of a penultimate prolyl residue from the N-termini of peptides. This is Probable Xaa-Pro aminopeptidase P (AMPP) from Ajellomyces capsulatus (strain G186AR / H82 / ATCC MYA-2454 / RMSCC 2432) (Darling's disease fungus).